The sequence spans 668 residues: UvrABC system protein B (668 aa).

A Helicase ATP-binding domain is found at 25–170 (NSILLGNKYQ…FVGQKISIKE (146 aa)). 38–45 (GVTGSGKT) contacts ATP. The Beta-hairpin motif lies at 91–114 (YYDYYQPESYVPSKDLFIEKEATI). The Helicase C-terminal domain maps to 429-595 (QMEDLYSEIQ…TIVKKIQNIL (167 aa)). Residues 622–657 (KKLIDKLKFDLEEAVNDERFEDAIVLRDKIKELSSK) enclose the UVR domain.

Belongs to the UvrB family. Forms a heterotetramer with UvrA during the search for lesions. Interacts with UvrC in an incision complex.

The protein resides in the cytoplasm. Its function is as follows. The UvrABC repair system catalyzes the recognition and processing of DNA lesions. A damage recognition complex composed of 2 UvrA and 2 UvrB subunits scans DNA for abnormalities. Upon binding of the UvrA(2)B(2) complex to a putative damaged site, the DNA wraps around one UvrB monomer. DNA wrap is dependent on ATP binding by UvrB and probably causes local melting of the DNA helix, facilitating insertion of UvrB beta-hairpin between the DNA strands. Then UvrB probes one DNA strand for the presence of a lesion. If a lesion is found the UvrA subunits dissociate and the UvrB-DNA preincision complex is formed. This complex is subsequently bound by UvrC and the second UvrB is released. If no lesion is found, the DNA wraps around the other UvrB subunit that will check the other stand for damage. In Borreliella burgdorferi (strain ZS7) (Borrelia burgdorferi), this protein is UvrABC system protein B.